Here is a 115-residue protein sequence, read N- to C-terminus: Cysteine-rich venom protein 5 (115 aa).

The first 22 residues, 1 to 22 (MSKVMIIMLVGMIFAIISTVSG), serve as a signal peptide directing secretion. 3 disulfides stabilise this stretch: Cys26–Cys41, Cys33–Cys44, and Cys40–Cys51. Residues 54 to 115 (RIGPPINTQP…RKPTNRPRSH (62 aa)) form a disordered region. Composition is skewed to basic residues over residues 68 to 77 (QPTRRTRGPK) and 86 to 115 (NRTRRPKPTNRSRRPKPTHRRKPTNRPRSH).

As to expression, expressed by the venom gland.

The protein localises to the secreted. This is Cysteine-rich venom protein 5 from Pimpla hypochondriaca (Parasitoid wasp).